A 298-amino-acid chain; its full sequence is Protease HtpX homolog (298 aa).

A run of 2 helical transmembrane segments spans residues 15–35 (LIMV…GYLF) and 39–59 (PWMG…IMWQ). Histidine 143 is a Zn(2+) binding site. Residue glutamate 144 is part of the active site. Position 147 (histidine 147) interacts with Zn(2+). The next 2 helical transmembrane spans lie at 153–173 (ILLS…SGMA) and 197–217 (MIFK…SASL). A Zn(2+)-binding site is contributed by glutamate 227.

This sequence belongs to the peptidase M48B family. The cofactor is Zn(2+).

Its subcellular location is the cell membrane. This Lactobacillus helveticus (strain DPC 4571) protein is Protease HtpX homolog.